A 672-amino-acid polypeptide reads, in one-letter code: Probable urocanate hydratase (672 aa).

Residues 128–129, Gln-206, 253–255, Glu-273, 318–319, 340–344, 351–352, Tyr-400, and Gly-592 each bind NAD(+); these read GG, GMS, NV, QTSLH, and YY.

This sequence belongs to the urocanase family. Requires NAD(+) as cofactor.

The enzyme catalyses 4-imidazolone-5-propanoate = trans-urocanate + H2O. It participates in amino-acid degradation; L-histidine degradation into L-glutamate; N-formimidoyl-L-glutamate from L-histidine: step 2/3. This is Probable urocanate hydratase (uroc1) from Dictyostelium discoideum (Social amoeba).